Here is a 184-residue protein sequence, read N- to C-terminus: Shikimate kinase (184 aa).

Position 12–17 (12–17 (GSGKST)) interacts with ATP. Mg(2+) is bound at residue serine 16. Residues aspartate 34, arginine 58, and glycine 80 each contribute to the substrate site. Arginine 117 is an ATP binding site. Arginine 136 lines the substrate pocket. Arginine 153 serves as a coordination point for ATP. A disordered region spans residues 163 to 184 (MSRLDDPTPNTSPSSTASGAAT). The segment covering 169–184 (PTPNTSPSSTASGAAT) has biased composition (low complexity).

This sequence belongs to the shikimate kinase family. As to quaternary structure, monomer. The cofactor is Mg(2+).

It localises to the cytoplasm. It catalyses the reaction shikimate + ATP = 3-phosphoshikimate + ADP + H(+). The protein operates within metabolic intermediate biosynthesis; chorismate biosynthesis; chorismate from D-erythrose 4-phosphate and phosphoenolpyruvate: step 5/7. Its function is as follows. Catalyzes the specific phosphorylation of the 3-hydroxyl group of shikimic acid using ATP as a cosubstrate. This Mycobacterium marinum (strain ATCC BAA-535 / M) protein is Shikimate kinase.